The sequence spans 239 residues: Ribosomal RNA small subunit methyltransferase G (239 aa).

S-adenosyl-L-methionine-binding positions include G77, F82, 128 to 129, and R147; that span reads AE.

The protein belongs to the methyltransferase superfamily. RNA methyltransferase RsmG family.

The protein localises to the cytoplasm. In terms of biological role, specifically methylates the N7 position of guanine in position 535 of 16S rRNA. In Bacillus mycoides (strain KBAB4) (Bacillus weihenstephanensis), this protein is Ribosomal RNA small subunit methyltransferase G.